Reading from the N-terminus, the 675-residue chain is Parasporal crystal protein Cry18Ba (675 aa).

Belongs to the delta endotoxin family.

Its function is as follows. Binds to the brush border membrane vesicles of scarab larvae and damages the gut wall somehow to allow the vegetative cells of P.popilliae to enter the hemolymph. This chain is Parasporal crystal protein Cry18Ba (cry18Ba), found in Paenibacillus popilliae (Bacillus popilliae).